An 860-amino-acid chain; its full sequence is DNA mismatch repair protein MutS (860 aa).

607-614 (GPNMSGKS) contributes to the ATP binding site.

This sequence belongs to the DNA mismatch repair MutS family.

In terms of biological role, this protein is involved in the repair of mismatches in DNA. It is possible that it carries out the mismatch recognition step. This protein has a weak ATPase activity. This chain is DNA mismatch repair protein MutS, found in Listeria monocytogenes serotype 4a (strain HCC23).